A 1020-amino-acid polypeptide reads, in one-letter code: Valine--tRNA ligase (1020 aa).

Residues 45–55 (PNVTGALHVGH) carry the 'HIGH' region motif. The short motif at 661 to 665 (KMSKT) is the 'KMSKS' region element. An ATP-binding site is contributed by Lys-664. Residues 955–1020 (AEKDRLEKAK…EALARLAELG (66 aa)) adopt a coiled-coil conformation.

This sequence belongs to the class-I aminoacyl-tRNA synthetase family. ValS type 1 subfamily. Monomer.

The protein resides in the cytoplasm. The enzyme catalyses tRNA(Val) + L-valine + ATP = L-valyl-tRNA(Val) + AMP + diphosphate. In terms of biological role, catalyzes the attachment of valine to tRNA(Val). As ValRS can inadvertently accommodate and process structurally similar amino acids such as threonine, to avoid such errors, it has a 'posttransfer' editing activity that hydrolyzes mischarged Thr-tRNA(Val) in a tRNA-dependent manner. The protein is Valine--tRNA ligase of Ruegeria pomeroyi (strain ATCC 700808 / DSM 15171 / DSS-3) (Silicibacter pomeroyi).